The following is a 327-amino-acid chain: 2-oxoisovalerate dehydrogenase subunit beta (327 aa).

Thiamine diphosphate contacts are provided by residues Glu-29, 58–60 (LAE), Gln-82, and 86–89 (FIMP). Residues 83 to 86 (FADF) and His-129 each bind substrate. His-129 (proton acceptor) is an active-site residue.

As to quaternary structure, heterotetramer of two alpha and two beta chains. Directly associated with ODBA in the E1 complex. Thiamine diphosphate serves as cofactor.

The enzyme catalyses N(6)-[(R)-lipoyl]-L-lysyl-[protein] + 3-methyl-2-oxobutanoate + H(+) = N(6)-[(R)-S(8)-2-methylpropanoyldihydrolipoyl]-L-lysyl-[protein] + CO2. Functionally, the branched-chain alpha-keto dehydrogenase complex catalyzes the overall conversion of alpha-keto acids to acyl-CoA and CO(2). It contains multiple copies of three enzymatic components: branched-chain alpha-keto acid decarboxylase (E1), lipoamide acyltransferase (E2) and lipoamide dehydrogenase (E3). This Bacillus subtilis (strain 168) protein is 2-oxoisovalerate dehydrogenase subunit beta (bfmBAB).